The primary structure comprises 356 residues: Protein-glutamate methylesterase/protein-glutamine glutaminase 2 (356 aa).

Residues Lys-6–Arg-123 form the Response regulatory domain. Position 57 is a 4-aspartylphosphate (Asp-57). The 192-residue stretch at Val-165–Ser-356 folds into the CheB-type methylesterase domain. Residues Ser-177, His-203, and Asp-299 contribute to the active site.

Belongs to the CheB family. Post-translationally, phosphorylated by CheA. Phosphorylation of the N-terminal regulatory domain activates the methylesterase activity.

The protein localises to the cytoplasm. The enzyme catalyses [protein]-L-glutamate 5-O-methyl ester + H2O = L-glutamyl-[protein] + methanol + H(+). It catalyses the reaction L-glutaminyl-[protein] + H2O = L-glutamyl-[protein] + NH4(+). Functionally, involved in chemotaxis. Part of a chemotaxis signal transduction system that modulates chemotaxis in response to various stimuli. Catalyzes the demethylation of specific methylglutamate residues introduced into the chemoreceptors (methyl-accepting chemotaxis proteins or MCP) by CheR. Also mediates the irreversible deamidation of specific glutamine residues to glutamic acid. This chain is Protein-glutamate methylesterase/protein-glutamine glutaminase 2, found in Oleidesulfovibrio alaskensis (strain ATCC BAA-1058 / DSM 17464 / G20) (Desulfovibrio alaskensis).